A 348-amino-acid chain; its full sequence is Phosphoribosylformylglycinamidine cyclo-ligase (348 aa).

The protein belongs to the AIR synthase family.

The protein resides in the cytoplasm. The enzyme catalyses 2-formamido-N(1)-(5-O-phospho-beta-D-ribosyl)acetamidine + ATP = 5-amino-1-(5-phospho-beta-D-ribosyl)imidazole + ADP + phosphate + H(+). The protein operates within purine metabolism; IMP biosynthesis via de novo pathway; 5-amino-1-(5-phospho-D-ribosyl)imidazole from N(2)-formyl-N(1)-(5-phospho-D-ribosyl)glycinamide: step 2/2. The polypeptide is Phosphoribosylformylglycinamidine cyclo-ligase (Geotalea uraniireducens (strain Rf4) (Geobacter uraniireducens)).